The primary structure comprises 372 residues: Pepsin A (372 aa).

A propeptide spans 1–42 (activation peptide); the sequence is MSVVKIPLVKKKSLRQNLIENGKLKEFMRTHKYNLGSKYIRE. The Peptidase A1 domain occupies 60–369; the sequence is YFGTIGIGTP…DRGNNQIGLA (310 aa). Residue aspartate 78 is part of the active site. A disulfide bridge connects residues cysteine 91 and cysteine 96. Position 114 is a phosphoserine (serine 114). An intrachain disulfide couples cysteine 252 to cysteine 256. Aspartate 261 is a catalytic residue. Cysteine 295 and cysteine 328 are disulfide-bonded.

Belongs to the peptidase A1 family.

It localises to the secreted. It catalyses the reaction Preferential cleavage: hydrophobic, preferably aromatic, residues in P1 and P1' positions. Cleaves 1-Phe-|-Val-2, 4-Gln-|-His-5, 13-Glu-|-Ala-14, 14-Ala-|-Leu-15, 15-Leu-|-Tyr-16, 16-Tyr-|-Leu-17, 23-Gly-|-Phe-24, 24-Phe-|-Phe-25 and 25-Phe-|-Tyr-26 bonds in the B chain of insulin.. In terms of biological role, shows particularly broad specificity; although bonds involving phenylalanine and leucine are preferred, many others are also cleaved to some extent. This is Pepsin A (PGA) from Bos taurus (Bovine).